A 172-amino-acid chain; its full sequence is Translocon-associated protein subunit delta (172 aa).

An N-terminal signal peptide occupies residues 1–24 (MAALASLGALALLLLSGLSCCSEA). Cys-25 and Cys-56 are disulfide-bonded. The Lumenal segment spans residues 25–143 (CVEPQITPSY…SVDHRGTWNG (119 aa)). Lys-72 is covalently cross-linked (Glycyl lysine isopeptide (Lys-Gly) (interchain with G-Cter in ubiquitin)). Residues 144-164 (PWVSTEVLAAAIGLVIYYLAF) form a helical membrane-spanning segment. The Cytoplasmic segment spans residues 165 to 172 (SAKSHIQA).

It belongs to the TRAP-delta family. Heterotetramer of TRAP-alpha, TRAP-beta, TRAP-delta and TRAP-gamma.

It localises to the endoplasmic reticulum membrane. Functionally, TRAP proteins are part of a complex whose function is to bind calcium to the ER membrane and thereby regulate the retention of ER resident proteins. In Bos taurus (Bovine), this protein is Translocon-associated protein subunit delta (SSR4).